The primary structure comprises 212 residues: Imidazole glycerol phosphate synthase subunit HisH (212 aa).

The region spanning 2–212 (QTAIIDYGMG…LTMLKNFLNW (211 aa)) is the Glutamine amidotransferase type-1 domain. Residue C85 is the Nucleophile of the active site. Catalysis depends on residues H194 and E196.

In terms of assembly, heterodimer of HisH and HisF.

It is found in the cytoplasm. It catalyses the reaction 5-[(5-phospho-1-deoxy-D-ribulos-1-ylimino)methylamino]-1-(5-phospho-beta-D-ribosyl)imidazole-4-carboxamide + L-glutamine = D-erythro-1-(imidazol-4-yl)glycerol 3-phosphate + 5-amino-1-(5-phospho-beta-D-ribosyl)imidazole-4-carboxamide + L-glutamate + H(+). It carries out the reaction L-glutamine + H2O = L-glutamate + NH4(+). The protein operates within amino-acid biosynthesis; L-histidine biosynthesis; L-histidine from 5-phospho-alpha-D-ribose 1-diphosphate: step 5/9. IGPS catalyzes the conversion of PRFAR and glutamine to IGP, AICAR and glutamate. The HisH subunit catalyzes the hydrolysis of glutamine to glutamate and ammonia as part of the synthesis of IGP and AICAR. The resulting ammonia molecule is channeled to the active site of HisF. The protein is Imidazole glycerol phosphate synthase subunit HisH of Neisseria gonorrhoeae (strain ATCC 700825 / FA 1090).